Here is a 167-residue protein sequence, read N- to C-terminus: Elafin (167 aa).

The first 21 residues, 1–21 (MRSRSFLVLVVVFLICGTLVA), serve as a signal peptide directing secretion. A propeptide spanning residues 22-70 (QAAGRIRRPKGKGTKKILALVKGQGPVRGKDQVKGQGPVKGQDLGKSQD) is cleaved from the precursor. A run of 12 repeats spans residues 44-49 (GQGPVR), 50-55 (GKDQVK), 56-61 (GQGPVK), 62-67 (GQDLGK), 68-73 (SQDPVK), 74-79 (AQLPDK), 80-85 (GQDLGK), 86-91 (GEDSVK), 92-97 (GQDPFK), 98-103 (AQLPDK), 104-109 (LQDPVK), and 110-115 (AQPAIK). A 12 X 6 AA tandem repeats of [GSAL]-[QEK]-[DGLP]-[APSLQ]-[VGDFI]-[KR] region spans residues 44–115 (GQGPVRGKDQ…DPVKAQPAIK (72 aa)). The disordered stretch occupies residues 46–104 (GPVRGKDQVKGQGPVKGQDLGKSQDPVKAQLPDKGQDLGKGEDSVKGQDPFKAQLPDKL). The 2 X tandem repeats of SVP-1 like motif stretch occupies residues 78–126 (DKGQDLGKGEDSVKGQDPFKAQLPDKLQDPVKAQPAIKRLILLTKPGSC). Residues 79–91 (KGQDLGKGEDSVK) show a composition bias toward basic and acidic residues. 2 SVP-1 clotting repeats span residues 80–101 (GQDLGKGEDSVKGQDPFKAQLP) and 104–126 (LQDPVKAQPAIKRLILLTKPGSC). The WAP domain occupies 119–167 (LLTKPGSCPRILIRCLMVNPPNRCLSDAQCPGLKKCCEGFCGKACMDPK). 4 disulfides stabilise this stretch: cysteine 126–cysteine 155, cysteine 133–cysteine 159, cysteine 142–cysteine 154, and cysteine 148–cysteine 163.

Trachea and large intestine.

In terms of biological role, neutrophil and pancreatic elastase-specific inhibitor of skin. It may prevent elastase-mediated tissue proteolysis. The sequence is that of Elafin from Sus scrofa (Pig).